A 221-amino-acid polypeptide reads, in one-letter code: uncharacterized protein (221 aa).

This is an uncharacterized protein from Treponema pallidum (strain Nichols).